A 332-amino-acid polypeptide reads, in one-letter code: Small ribosomal subunit protein uS2 (332 aa).

This sequence belongs to the universal ribosomal protein uS2 family.

This chain is Small ribosomal subunit protein uS2, found in Nitrobacter hamburgensis (strain DSM 10229 / NCIMB 13809 / X14).